Here is a 718-residue protein sequence, read N- to C-terminus: Polyribonucleotide nucleotidyltransferase (718 aa).

Residues D496 and D502 each coordinate Mg(2+). The 60-residue stretch at 563 to 622 folds into the KH domain; the sequence is PRLLTIKIDPDMIGLVIGPGGKTIKGITEETGAKIDIEDDGTVTISAVDENKAKRARNIV. An S1 motif domain is found at 632–700; that stretch reads GDVYAGRVTR…NKGRINLTRL (69 aa).

The protein belongs to the polyribonucleotide nucleotidyltransferase family. It depends on Mg(2+) as a cofactor.

It localises to the cytoplasm. The enzyme catalyses RNA(n+1) + phosphate = RNA(n) + a ribonucleoside 5'-diphosphate. Involved in mRNA degradation. Catalyzes the phosphorolysis of single-stranded polyribonucleotides processively in the 3'- to 5'-direction. This chain is Polyribonucleotide nucleotidyltransferase, found in Trichormus variabilis (strain ATCC 29413 / PCC 7937) (Anabaena variabilis).